Here is a 673-residue protein sequence, read N- to C-terminus: Citrate exporter 1 (673 aa).

Residues 1–44 (MFNLNTKSSKEPEVTEVAVDSTPSSPVTRESSPESSPDNSAVDL) form a disordered region. Residues 21 to 39 (STPSSPVTRESSPESSPDN) show a composition bias toward polar residues. A helical membrane pass occupies residues 67-87 (FLVFGAMAFCMLVSFMDQNGI). Asn-99 is a glycosylation site (N-linked (GlcNAc...) asparagine). Transmembrane regions (helical) follow at residues 103–123 (TISWAGTSGLIANTVFQVLYG), 133–153 (LVFMIVVCTLVCADIGCACAQ), 164–184 (FSGIANGGMSCLTMIVVSDIV), and 194–214 (GILGACVGLGNTIGPFLGAAF). Residue Asn-217 is glycosylated (N-linked (GlcNAc...) asparagine). A run of 8 helical transmembrane segments spans residues 222 to 242 (AIFYLLAPMGGLCAVVIFFIL), 261 to 281 (PGLFCSSVALVFLLVPIAGGG), 292 to 312 (ISMLCIGGVFFIAFFVIEGFF), 322 to 342 (IFGTKALFALMMHSVLLGIAY), 364 to 384 (AAGMSCALVTTQAVTTVISGQ), 393 to 413 (LEVIYFGFGIWTVGAIMKCFW), 419 to 439 (MALLIFSLLFEGAGVGCCFQP), and 465 to 485 (SFGGAVGLAVCSAILANSLKA). N-linked (GlcNAc...) asparagine glycosylation is present at Asn-526. Residues 529-549 (HTVFVFLCPIVGACLLVTVFV) form a helical membrane-spanning segment. The span at 564 to 596 (AKTVEDKDKDESGTDCEDMTKGEVLVSEKEGKL) shows a compositional bias: basic and acidic residues. 2 disordered regions span residues 564–608 (AKTV…MHFG) and 636–673 (FPPMDHNDVITPLEDFDESPLPPHSPNSSGKRVTIQEE). Residues Asn-599 and Asn-662 are each glycosylated (N-linked (GlcNAc...) asparagine).

This sequence belongs to the major facilitator superfamily.

The protein resides in the cell membrane. The enzyme catalyses citrate(in) = citrate(out). In terms of biological role, transmembrane transporter that exports citrate across the cell membrane. The sequence is that of Citrate exporter 1 from Yarrowia lipolytica (strain CLIB 122 / E 150) (Yeast).